The primary structure comprises 227 residues: tRNA (guanine-N(7)-)-methyltransferase (227 aa).

S-adenosyl-L-methionine-binding residues include Glu58, Glu83, Asp110, and Asp132. Asp132 is a catalytic residue. Residues Lys136, Asp168, and 205–208 (TRFE) each bind substrate.

The protein belongs to the class I-like SAM-binding methyltransferase superfamily. TrmB family.

It carries out the reaction guanosine(46) in tRNA + S-adenosyl-L-methionine = N(7)-methylguanosine(46) in tRNA + S-adenosyl-L-homocysteine. The protein operates within tRNA modification; N(7)-methylguanine-tRNA biosynthesis. Functionally, catalyzes the formation of N(7)-methylguanine at position 46 (m7G46) in tRNA. This is tRNA (guanine-N(7)-)-methyltransferase from Acidithiobacillus ferrooxidans (strain ATCC 23270 / DSM 14882 / CIP 104768 / NCIMB 8455) (Ferrobacillus ferrooxidans (strain ATCC 23270)).